Reading from the N-terminus, the 122-residue chain is MIQQESRLKVADNSGARELLTIKVLGGSGRKYANIGDIIVATVKQATPGGVVKKGDVVKAVVVRTKSGARRPDGSYIKFDENAAVIIKDDKSPRGTRIFGPVARELRDSNFMKIVSLAPEVL.

This sequence belongs to the universal ribosomal protein uL14 family. As to quaternary structure, part of the 50S ribosomal subunit. Forms a cluster with proteins L3 and L19. In the 70S ribosome, L14 and L19 interact and together make contacts with the 16S rRNA in bridges B5 and B8.

Functionally, binds to 23S rRNA. Forms part of two intersubunit bridges in the 70S ribosome. This Bacillus anthracis (strain A0248) protein is Large ribosomal subunit protein uL14.